A 295-amino-acid chain; its full sequence is Indole-3-glycerol phosphate synthase (295 aa).

Belongs to the TrpC family.

The catalysed reaction is 1-(2-carboxyphenylamino)-1-deoxy-D-ribulose 5-phosphate + H(+) = (1S,2R)-1-C-(indol-3-yl)glycerol 3-phosphate + CO2 + H2O. It functions in the pathway amino-acid biosynthesis; L-tryptophan biosynthesis; L-tryptophan from chorismate: step 4/5. This Prochlorococcus marinus (strain AS9601) protein is Indole-3-glycerol phosphate synthase.